Consider the following 822-residue polypeptide: Adhesion G protein-coupled receptor E2 (822 aa).

An N-terminal signal peptide occupies residues 1 to 18; sequence MGGRVFLAFCVWLTLLGA. Residues 19–530 lie on the Extracellular side of the membrane; sequence ETQDSRDCAR…DVQEEDPVLT (512 aa). Residues 22 to 63 form the EGF-like 1 domain; that stretch reads DSRDCARWCPENSSCVNATACRCNPGFSSSSEIFTSPTEICD. 5 disulfide bridges follow: Cys-26–Cys-36, Cys-30–Cys-42, Cys-44–Cys-62, Cys-68–Cys-82, and Cys-76–Cys-91. 2 N-linked (GlcNAc...) asparagine glycosylation sites follow: Asn-33 and Asn-38. One can recognise an EGF-like 1; calcium-binding domain in the interval 64 to 103; that stretch reads DINECVPPSKVSCGKSSDCRNTEGSYDCVCNPGYELVSGA. Asn-108 carries N-linked (GlcNAc...) asparagine glycosylation. In terms of domain architecture, EGF-like 2; calcium-binding spans 116 to 159; the sequence is DVDECQQNPRLCKSYGTCVNTLGSFTCQCLPGFKFKPEDPKLCT. 5 disulfide bridges follow: Cys-120-Cys-133, Cys-127-Cys-142, Cys-144-Cys-158, Cys-164-Cys-177, and Cys-171-Cys-186. In terms of domain architecture, EGF-like 3; calcium-binding spans 160–198; that stretch reads DVNECTSGQNPCHSSTHCLNNVGSYQCRCRPGWQPIPGS. N-linked (GlcNAc...) asparagine glycans are attached at residues Asn-203, Asn-222, Asn-351, Asn-371, Asn-427, Asn-449, and Asn-453. The EGF-like 4; calcium-binding domain maps to 209-247; the sequence is DVDECSSGLHQCDNSTVCFNTVGSYTCRCRPGWEPKHGI. Cystine bridges form between Cys-213–Cys-226 and Cys-220–Cys-235. Residues 351–523 form the GAIN-B domain; that stretch reads NFSYPAGTEF…AVLMAPYDVQ (173 aa). 2 disulfides stabilise this stretch: Cys-475–Cys-505 and Cys-493–Cys-507. The segment at 475-523 is GPS; sequence CVFWEHGQNGCGHWATTGCSTMDTRDTSTICRCTHLSSFAVLMAPYDVQ. A helical membrane pass occupies residues 531–551; the sequence is VITYMGLSLSLLCLLLAALTF. Residues 552–562 lie on the Cytoplasmic side of the membrane; the sequence is LLCKAIQNIST. A helical membrane pass occupies residues 563-583; the sequence is SLHLQLSLCLLLAHLLFLVAI. The Extracellular portion of the chain corresponds to 584 to 589; sequence DRTEHE. A helical transmembrane segment spans residues 590-610; that stretch reads VLCAIIASALHYLYLAAFTWM. The Cytoplasmic portion of the chain corresponds to 611–637; the sequence is LLEALYLFLTARNLMVVNYSSINRFTK. A helical membrane pass occupies residues 638-658; sequence KLMFPVAYGVPAVTVAISAAS. Topologically, residues 659-676 are extracellular; the sequence is RPHLYGTPSRCWLQPEKG. Residues 677 to 697 form a helical membrane-spanning segment; it reads FIWGFLGPVCAIFSVNLALLL. At 698-728 the chain is on the cytoplasmic side; that stretch reads VTLWILKNRLSSLNNEVSTLQNTRMLAFKAT. The chain crosses the membrane as a helical span at residues 729–749; that stretch reads AQLFILGCTWCLGILQVGPAA. Topologically, residues 750–753 are extracellular; sequence RVMA. Residues 754-774 form a helical membrane-spanning segment; it reads YLFTIINSLQGVFIFLVYCLL. Residues 775 to 822 are Cytoplasmic-facing; it reads SQQVREQYRKWSKGFRKLRTESEMHTLSSSAKRDTPKPSTPGLLGLQS. A disordered region spans residues 797-822; the sequence is EMHTLSSSAKRDTPKPSTPGLLGLQS.

This sequence belongs to the G-protein coupled receptor 2 family. Adhesion G-protein coupled receptor (ADGR) subfamily. As to quaternary structure, forms a heterodimer, consisting of a large extracellular region non-covalently linked to a seven-transmembrane moiety. Interacts with chondroitin sulfate; the interaction with chondroitin sulfate is calcium-dependent. Interacts with CD55. Post-translationally, autoproteolytically cleaved into 2 subunits, an extracellular alpha subunit and a seven-transmembrane beta subunit.

Its subcellular location is the cell membrane. The protein localises to the cell projection. It localises to the ruffle membrane. Cell surface receptor that binds to the chondroitin sulfate moiety of glycosaminoglycan chains and promotes cell attachment. Promotes granulocyte chemotaxis, degranulation and adhesion. In macrophages, promotes the release of inflammatory cytokines, including IL8 and TNF. Signals probably through G-proteins. In Macaca mulatta (Rhesus macaque), this protein is Adhesion G protein-coupled receptor E2 (ADGRE2).